The sequence spans 344 residues: Uroporphyrinogen decarboxylase (344 aa).

Residues 27–31 (RQAGR), Phe-46, Asp-77, Tyr-153, Thr-208, and His-324 each bind substrate.

It belongs to the uroporphyrinogen decarboxylase family. As to quaternary structure, homodimer.

The protein resides in the cytoplasm. It carries out the reaction uroporphyrinogen III + 4 H(+) = coproporphyrinogen III + 4 CO2. It participates in porphyrin-containing compound metabolism; protoporphyrin-IX biosynthesis; coproporphyrinogen-III from 5-aminolevulinate: step 4/4. In terms of biological role, catalyzes the decarboxylation of four acetate groups of uroporphyrinogen-III to yield coproporphyrinogen-III. The chain is Uroporphyrinogen decarboxylase from Bradyrhizobium diazoefficiens (strain JCM 10833 / BCRC 13528 / IAM 13628 / NBRC 14792 / USDA 110).